We begin with the raw amino-acid sequence, 331 residues long: PDZ and LIM domain protein 4 (331 aa).

The PDZ domain maps to 1–84 (MPHSVTLRGP…HLTLSVSRPE (84 aa)). Disordered regions lie at residues 80-99 (VSRPEGRSWPSTPEDNKAQA), 105-152 (DSEA…GSNS), and 221-243 (AGEGGERPGPGGPRNLKPTASKL). Phosphoserine occurs at positions 112, 116, 120, and 135. One can recognise an LIM zinc-binding domain in the interval 254–313 (PECTRCGHGIVGTIVKARDKLYHPECFMCSDCGLNLKQRGYFFLDERLYCESHAKARVKP).

Homodimer. Interacts (via C-terminus only or via combined C-terminus and LIM domain, but not LIM domain only) with PTPN13 (via the second or fourth PDZ domains). Found in a complex with PTPN13 and TRIP6. Interacts (via PDZ domain) with ACTN1 and ACTN2 (via C-terminal SDL residues). Interacts (via PDZ domain) with TRIP6 (via the second LIM domain or via the third LIM domain plus C-terminus). Interacts (via LIM domain) with GRIA1 (via C-terminus); this interaction as well as the interaction with alpha-actinin is required for their colocalization in early endosomes. Interacts with PDLIM1. Forms (via LIM domain) a heterodimer with PDLIM3. Interacts directly with SRC (via kinase domain and to a lesser extent the SH2 domain). Phosphorylated on tyrosine residue(s). Can be dephosphorylated by PTPN13.

It is found in the cytoplasm. Its subcellular location is the cytoskeleton. It localises to the cell projection. The protein resides in the dendritic spine. The protein localises to the early endosome membrane. It is found in the recycling endosome membrane. Its subcellular location is the nucleus. It localises to the perinuclear region. The protein resides in the lamellipodium. The protein localises to the synapse. It is found in the synaptosome. Functionally, suppresses SRC activation by recognizing and binding to active SRC and facilitating PTPN13-mediated dephosphorylation of SRC 'Tyr-419' leading to its inactivation. Inactivated SRC dissociates from this protein allowing the initiation of a new SRC inactivation cycle. Involved in reorganization of the actin cytoskeleton. In nonmuscle cells, binds to ACTN1 (alpha-actinin-1), increases the affinity of ACTN1 to F-actin (filamentous actin), and promotes formation of actin stress fibers. Involved in regulation of the synaptic AMPA receptor transport in dendritic spines of hippocampal pyramidal neurons directing the receptors toward an insertion at the postsynaptic membrane. Links endosomal surface-internalized GRIA1-containing AMPA receptors to the alpha-actinin/actin cytoskeleton. Increases AMPA receptor-mediated excitatory postsynaptic currents in neurons. The polypeptide is PDZ and LIM domain protein 4 (PDLIM4) (Bos taurus (Bovine)).